Consider the following 42-residue polypeptide: MRDLKTYLSVAPVLSTLWFVSLAGLLIEINRLFPDALTFPFF.

The chain crosses the membrane as a helical span at residues 7–27 (YLSVAPVLSTLWFVSLAGLLI).

This sequence belongs to the PsaJ family.

It localises to the plastid. Its subcellular location is the chloroplast thylakoid membrane. In terms of biological role, may help in the organization of the PsaE and PsaF subunits. The protein is Photosystem I reaction center subunit IX of Capsella bursa-pastoris (Shepherd's purse).